Consider the following 420-residue polypeptide: Phosphoribosylamine--glycine ligase (420 aa).

Residues 108–314 (KQFMEKYAIP…FAALIDALLH (207 aa)) form the ATP-grasp domain. 134–195 (LNERGVPIVI…EDFLAGEEFS (62 aa)) is an ATP binding site. Mg(2+) is bound by residues glutamate 284 and asparagine 286.

The protein belongs to the GARS family. It depends on Mg(2+) as a cofactor. Mn(2+) serves as cofactor.

The catalysed reaction is 5-phospho-beta-D-ribosylamine + glycine + ATP = N(1)-(5-phospho-beta-D-ribosyl)glycinamide + ADP + phosphate + H(+). It participates in purine metabolism; IMP biosynthesis via de novo pathway; N(1)-(5-phospho-D-ribosyl)glycinamide from 5-phospho-alpha-D-ribose 1-diphosphate: step 2/2. In Listeria monocytogenes serovar 1/2a (strain ATCC BAA-679 / EGD-e), this protein is Phosphoribosylamine--glycine ligase.